The primary structure comprises 397 residues: Acetate kinase 2 (397 aa).

Residue Asn10 coordinates Mg(2+). Position 17 (Lys17) interacts with ATP. Arg90 provides a ligand contact to substrate. Asp147 acts as the Proton donor/acceptor in catalysis. ATP contacts are provided by residues 207–211 (HLGNG), 281–283 (DCR), and 329–333 (GIGEN). Residue Glu383 coordinates Mg(2+).

The protein belongs to the acetokinase family. As to quaternary structure, homodimer. Mg(2+) is required as a cofactor. Requires Mn(2+) as cofactor.

Its subcellular location is the cytoplasm. It catalyses the reaction acetate + ATP = acetyl phosphate + ADP. The protein operates within metabolic intermediate biosynthesis; acetyl-CoA biosynthesis; acetyl-CoA from acetate: step 1/2. Functionally, catalyzes the formation of acetyl phosphate from acetate and ATP. Can also catalyze the reverse reaction. The chain is Acetate kinase 2 from Photobacterium profundum (strain SS9).